We begin with the raw amino-acid sequence, 786 residues long: Ciliated left-right organizer ZP-N domains-containing protein (786 aa).

A signal peptide spans Met1 to Pro18.

Expressed specifically by cells of the ciliated left-right organizer.

Functionally, plays a role in left-right patterning process. The sequence is that of Ciliated left-right organizer ZP-N domains-containing protein (Ciroz) from Mus musculus (Mouse).